We begin with the raw amino-acid sequence, 260 residues long: PHD finger protein ALFIN-LIKE 5 (260 aa).

Met-1 is subject to N-acetylmethionine. The interval 142 to 203 (AEKQTKEMPS…EEDEDEDEHG (62 aa)) is disordered. A compositionally biased stretch (polar residues) spans 148–165 (EMPSSANQNGNRSKSNSK). Basic and acidic residues predominate over residues 167 to 181 (RGLESKSSKTIHAKD). Residues 182 to 202 (EEEGLELEEGEEEEDEDEDEH) show a composition bias toward acidic residues. The PHD-type zinc-finger motif lies at 204–256 (ETLCGACGDNYASDEFWICCDMCEKWFHGECVKITPARAEHIKHYKCPTCSNK).

This sequence belongs to the Alfin family. Interacts with H3K4me3 and to a lesser extent with H3K4me2. In terms of tissue distribution, ubiquitously expressed.

It is found in the nucleus. Its function is as follows. Histone-binding component that specifically recognizes H3 tails trimethylated on 'Lys-4' (H3K4me3), which mark transcription start sites of virtually all active genes. The sequence is that of PHD finger protein ALFIN-LIKE 5 (AL5) from Arabidopsis thaliana (Mouse-ear cress).